We begin with the raw amino-acid sequence, 103 residues long: N(4)-acetylcytidine amidohydrolase (103 aa).

The region spanning 6 to 92 is the ASCH domain; the sequence is TFFERFEQDI…VIQEIYPGLE (87 aa). Residue Lys20 is the Proton acceptor of the active site. Thr23 acts as the Nucleophile in catalysis. Residue Glu73 is the Proton donor of the active site.

The protein belongs to the N(4)-acetylcytidine amidohydrolase family.

The catalysed reaction is N(4)-acetylcytidine + H2O = cytidine + acetate + H(+). It catalyses the reaction N(4)-acetyl-2'-deoxycytidine + H2O = 2'-deoxycytidine + acetate + H(+). It carries out the reaction N(4)-acetylcytosine + H2O = cytosine + acetate + H(+). Its function is as follows. Catalyzes the hydrolysis of N(4)-acetylcytidine (ac4C). This Shewanella sp. (strain MR-4) protein is N(4)-acetylcytidine amidohydrolase.